The chain runs to 481 residues: Keratin, type I cytoskeletal 39 (481 aa).

The tract at residues 1-25 (MDTKGSTVTISSSTPPQNCSGNTNV) is disordered. The interval 1–90 (MDTKGSTVTI…RCSDGINSHE (90 aa)) is head. The 312-residue stretch at 90–401 (EKETMQILNE…SLLESLDGRL (312 aa)) folds into the IF rod domain. The segment at 91–125 (KETMQILNERLASYLEKVRMLEGENADLEDKIQEE) is coil 1A. Positions 126–136 (CSKTLPILCPD) are linker 1. The segment at 137 to 237 (YLSYYTTIEQ…HEEEINSLQC (101 aa)) is coil 1B. A linker 12 region spans residues 238–253 (QLGDRINIEVTAAPSV). Positions 254–397 (DLNQILQKMR…ATYRSLLESL (144 aa)) are coil 2. Residues 398 to 481 (DGRLPCNPCT…PCYITRPAKV (84 aa)) form a tail region.

It belongs to the intermediate filament family. As to quaternary structure, heterotetramer of two type I and two type II keratins.

In terms of biological role, may play a role in late hair differentiation. This chain is Keratin, type I cytoskeletal 39 (Krt39), found in Rattus norvegicus (Rat).